The chain runs to 98 residues: UPF0235 protein Asuc_1977 (98 aa).

It belongs to the UPF0235 family.

This is UPF0235 protein Asuc_1977 from Actinobacillus succinogenes (strain ATCC 55618 / DSM 22257 / CCUG 43843 / 130Z).